The sequence spans 249 residues: Triosephosphate isomerase (249 aa).

Substrate contacts are provided by Asn-12 and Lys-14. Lys-14 is subject to N6-acetyllysine. 3'-nitrotyrosine is present on Tyr-68. Position 80 is a phosphoserine (Ser-80). Catalysis depends on His-96, which acts as the Electrophile. Ser-106 is subject to Phosphoserine. Lys-142 is covalently cross-linked (Glycyl lysine isopeptide (Lys-Gly) (interchain with G-Cter in SUMO1)). Lys-149 is subject to N6-succinyllysine. The residue at position 156 (Lys-156) is an N6-acetyllysine; alternate. Position 156 is an N6-succinyllysine; alternate (Lys-156). Ser-159 carries the post-translational modification Phosphoserine. The Proton acceptor role is filled by Glu-166. Thr-173 is subject to Phosphothreonine. Lys-194 is subject to N6-acetyllysine; alternate. Lys-194 bears the N6-succinyllysine; alternate mark. An N6-methyllysine; alternate modification is found at Lys-194. Position 198 is a phosphoserine (Ser-198). Tyr-209 bears the 3'-nitrotyrosine mark. Position 212 is a phosphoserine (Ser-212). Thr-214 carries the phosphothreonine modification. Ser-223 carries the post-translational modification Phosphoserine. Lys-238 carries the N6-acetyllysine modification.

The protein belongs to the triosephosphate isomerase family. In terms of assembly, homodimer.

Its subcellular location is the cytoplasm. It carries out the reaction dihydroxyacetone phosphate = methylglyoxal + phosphate. The enzyme catalyses D-glyceraldehyde 3-phosphate = dihydroxyacetone phosphate. The protein operates within carbohydrate degradation; glycolysis; D-glyceraldehyde 3-phosphate from glycerone phosphate: step 1/1. It functions in the pathway carbohydrate biosynthesis; gluconeogenesis. Functionally, triosephosphate isomerase is an extremely efficient metabolic enzyme that catalyzes the interconversion between dihydroxyacetone phosphate (DHAP) and D-glyceraldehyde-3-phosphate (G3P) in glycolysis and gluconeogenesis. In terms of biological role, it is also responsible for the non-negligible production of methylglyoxal a reactive cytotoxic side-product that modifies and can alter proteins, DNA and lipids. The polypeptide is Triosephosphate isomerase (TPI1) (Pongo abelii (Sumatran orangutan)).